Here is a 406-residue protein sequence, read N- to C-terminus: Methylthioribose-1-phosphate isomerase (406 aa).

The active-site Proton donor is the Asp277.

Belongs to the eIF-2B alpha/beta/delta subunits family. MtnA subfamily.

It localises to the cytoplasm. Its subcellular location is the nucleus. It carries out the reaction 5-(methylsulfanyl)-alpha-D-ribose 1-phosphate = 5-(methylsulfanyl)-D-ribulose 1-phosphate. The protein operates within amino-acid biosynthesis; L-methionine biosynthesis via salvage pathway; L-methionine from S-methyl-5-thio-alpha-D-ribose 1-phosphate: step 1/6. Its function is as follows. Catalyzes the interconversion of methylthioribose-1-phosphate (MTR-1-P) into methylthioribulose-1-phosphate (MTRu-1-P). The polypeptide is Methylthioribose-1-phosphate isomerase (Debaryomyces hansenii (strain ATCC 36239 / CBS 767 / BCRC 21394 / JCM 1990 / NBRC 0083 / IGC 2968) (Yeast)).